Here is a 343-residue protein sequence, read N- to C-terminus: MKALVKSRRAEGIWMVHDAPVPEVGVHDVRIRVRKSAICGTDVHIYNWDEWSQRTIPVPMIVGHEYVGVVDAVGGEVEAFHPGDRVSGEGHVTCGFCRNCRAGRRHLCRHTIGVGVNRPGSFAEYVVIPADNVYRIPDDIPDEVAAIFDPYGNATHTALSFELVGEDVLVTGAGPIGVMAVSIARHVGARHVVVTDVNDYRLGLARRMGATRAVNVAREDLRAVMKDLGMKEGFDVGLEMSGNGRAFRQMLEAMNHGAKVALLGIMPGEEAIDWSQVVFKGLVLKGIYGREMYETWYKMVAMLQSGLDISPVITHRFPIDEFQQGFDVMRSGQSGKVVLDWGT.

Position 39 (Cys-39) interacts with Zn(2+). Catalysis depends on charge relay system residues Thr-41 and His-44. Zn(2+) is bound by residues His-64, Glu-65, Cys-94, Cys-97, Cys-100, and Cys-108. NAD(+) is bound by residues Ile-176, Asp-196, Arg-201, 263 to 265 (LGI), and 287 to 288 (IY).

It belongs to the zinc-containing alcohol dehydrogenase family. Homotetramer. The cofactor is Zn(2+).

It localises to the cytoplasm. It carries out the reaction L-threonine + NAD(+) = (2S)-2-amino-3-oxobutanoate + NADH + H(+). It functions in the pathway amino-acid degradation; L-threonine degradation via oxydo-reductase pathway; glycine from L-threonine: step 1/2. Its function is as follows. Catalyzes the NAD(+)-dependent oxidation of L-threonine to 2-amino-3-ketobutyrate. The chain is L-threonine 3-dehydrogenase from Anaeromyxobacter sp. (strain Fw109-5).